The following is a 122-amino-acid chain: Large ribosomal subunit protein uL14 (122 aa).

The protein belongs to the universal ribosomal protein uL14 family. In terms of assembly, part of the 50S ribosomal subunit. Forms a cluster with proteins L3 and L19. In the 70S ribosome, L14 and L19 interact and together make contacts with the 16S rRNA in bridges B5 and B8.

Functionally, binds to 23S rRNA. Forms part of two intersubunit bridges in the 70S ribosome. The chain is Large ribosomal subunit protein uL14 from Trichormus variabilis (strain ATCC 29413 / PCC 7937) (Anabaena variabilis).